A 226-amino-acid chain; its full sequence is Endonuclease V (226 aa).

Mg(2+) is bound by residues D43 and D111.

The protein belongs to the endonuclease V family. Mg(2+) serves as cofactor.

The protein resides in the cytoplasm. It carries out the reaction Endonucleolytic cleavage at apurinic or apyrimidinic sites to products with a 5'-phosphate.. In terms of biological role, DNA repair enzyme involved in the repair of deaminated bases. Selectively cleaves double-stranded DNA at the second phosphodiester bond 3' to a deoxyinosine leaving behind the intact lesion on the nicked DNA. The chain is Endonuclease V from Nocardia farcinica (strain IFM 10152).